An 85-amino-acid chain; its full sequence is Putative membrane protein insertion efficiency factor (85 aa).

Belongs to the UPF0161 family.

The protein localises to the cell inner membrane. Functionally, could be involved in insertion of integral membrane proteins into the membrane. This Phenylobacterium zucineum (strain HLK1) protein is Putative membrane protein insertion efficiency factor.